The sequence spans 268 residues: Nickel import ATP-binding protein NikE (268 aa).

In terms of domain architecture, ABC transporter spans 4–252 (LNVCGLSHHY…SSDAGRVLQN (249 aa)). 45–52 (GRSGCGKS) serves as a coordination point for ATP.

It belongs to the ABC transporter superfamily. Nickel importer (TC 3.A.1.5.3) family. As to quaternary structure, the complex is composed of two ATP-binding proteins (NikD and NikE), two transmembrane proteins (NikB and NikC) and a solute-binding protein (NikA).

Its subcellular location is the cell inner membrane. It carries out the reaction Ni(2+)(out) + ATP + H2O = Ni(2+)(in) + ADP + phosphate + H(+). Part of the ABC transporter complex NikABCDE involved in nickel import. Responsible for energy coupling to the transport system. The chain is Nickel import ATP-binding protein NikE from Shigella flexneri serotype 5b (strain 8401).